Here is a 136-residue protein sequence, read N- to C-terminus: Peptide methionine sulfoxide reductase MsrB (136 aa).

Residues 13 to 135 (ENDWRSKLTP…NSASLDFKDK (123 aa)) enclose the MsrB domain. Zn(2+)-binding residues include cysteine 52, cysteine 55, cysteine 101, and cysteine 104. Cysteine 124 functions as the Nucleophile in the catalytic mechanism.

The protein belongs to the MsrB Met sulfoxide reductase family. It depends on Zn(2+) as a cofactor.

The catalysed reaction is L-methionyl-[protein] + [thioredoxin]-disulfide + H2O = L-methionyl-(R)-S-oxide-[protein] + [thioredoxin]-dithiol. The protein is Peptide methionine sulfoxide reductase MsrB of Synechococcus sp. (strain RCC307).